The primary structure comprises 1032 residues: Serine/threonine-protein kinase ppk31 (1032 aa).

A PAS domain is found at 3–72 (NPEQLKRILS…KATDNLFRKS (70 aa)). In terms of domain architecture, Protein kinase spans 528–877 (FILLKEINRG…YQEIKKHPFF (350 aa)). ATP contacts are provided by residues 534-542 (INRGAYGRV) and lysine 557. Catalysis depends on aspartate 652, which acts as the Proton acceptor. The tract at residues 938–963 (PKATPADSGTETSNSAAFSASEEETT) is disordered. Low complexity predominate over residues 947 to 957 (TETSNSAAFSA).

Belongs to the protein kinase superfamily. Ser/Thr protein kinase family.

It is found in the cytoplasm. It carries out the reaction L-seryl-[protein] + ATP = O-phospho-L-seryl-[protein] + ADP + H(+). The enzyme catalyses L-threonyl-[protein] + ATP = O-phospho-L-threonyl-[protein] + ADP + H(+). Functionally, has a role in meiosis. This Schizosaccharomyces pombe (strain 972 / ATCC 24843) (Fission yeast) protein is Serine/threonine-protein kinase ppk31 (ppk31).